The following is a 184-amino-acid chain: Protein GrpE (184 aa).

The interval 1–26 (MTAPQEPVDSTPESGENAATPGLEDD) is disordered.

The protein belongs to the GrpE family. Homodimer.

The protein localises to the cytoplasm. Functionally, participates actively in the response to hyperosmotic and heat shock by preventing the aggregation of stress-denatured proteins, in association with DnaK and GrpE. It is the nucleotide exchange factor for DnaK and may function as a thermosensor. Unfolded proteins bind initially to DnaJ; upon interaction with the DnaJ-bound protein, DnaK hydrolyzes its bound ATP, resulting in the formation of a stable complex. GrpE releases ADP from DnaK; ATP binding to DnaK triggers the release of the substrate protein, thus completing the reaction cycle. Several rounds of ATP-dependent interactions between DnaJ, DnaK and GrpE are required for fully efficient folding. This Bordetella bronchiseptica (strain ATCC BAA-588 / NCTC 13252 / RB50) (Alcaligenes bronchisepticus) protein is Protein GrpE.